A 404-amino-acid polypeptide reads, in one-letter code: Protein L-Myc-1b (404 aa).

Disordered stretches follow at residues 175–195 (KKQVSSGSESRTDSSDDEEID) and 238–331 (QQHN…FLER). Residues 287–315 (VPAQSPTVSASPTHTSYHLKSQPSSPQSS) show a composition bias toward polar residues. A bHLH domain is found at 321-373 (DKRKTHNFLERKRRNDLRSRFLALRDEIPGLVDCPKTPKVVILTKATEYLRTL). Positions 373–401 (LHVSDRQKAQEKKQLKSKQQQLLRRLAEL) are leucine-zipper.

In terms of assembly, efficient DNA binding requires dimerization with another bHLH protein. Binds DNA as a heterodimer with max.

The protein localises to the nucleus. The protein is Protein L-Myc-1b of Danio rerio (Zebrafish).